The following is a 200-amino-acid chain: 3-isopropylmalate dehydratase small subunit (200 aa).

It belongs to the LeuD family. LeuD type 1 subfamily. In terms of assembly, heterodimer of LeuC and LeuD.

It catalyses the reaction (2R,3S)-3-isopropylmalate = (2S)-2-isopropylmalate. The protein operates within amino-acid biosynthesis; L-leucine biosynthesis; L-leucine from 3-methyl-2-oxobutanoate: step 2/4. Its function is as follows. Catalyzes the isomerization between 2-isopropylmalate and 3-isopropylmalate, via the formation of 2-isopropylmaleate. In Methylobacterium radiotolerans (strain ATCC 27329 / DSM 1819 / JCM 2831 / NBRC 15690 / NCIMB 10815 / 0-1), this protein is 3-isopropylmalate dehydratase small subunit.